Reading from the N-terminus, the 241-residue chain is uncharacterized protein (241 aa).

Residues 19 to 53 are disordered; that stretch reads KRIGYGMGEKSSAGSSRDQTYSVKPASDVKDKKKV. Residues 30-39 show a composition bias toward polar residues; that stretch reads SAGSSRDQTY.

This is an uncharacterized protein from Ostreid herpesvirus 1 (isolate France) (OsHV-1).